A 231-amino-acid polypeptide reads, in one-letter code: Orotidine 5'-phosphate decarboxylase (231 aa).

Residues D9, K34, 62–71, T117, R179, Q188, G208, and R209 each bind substrate; that span reads DLKLHDIPSV. K64 acts as the Proton donor in catalysis.

It belongs to the OMP decarboxylase family. Type 1 subfamily. In terms of assembly, homodimer.

The enzyme catalyses orotidine 5'-phosphate + H(+) = UMP + CO2. It participates in pyrimidine metabolism; UMP biosynthesis via de novo pathway; UMP from orotate: step 2/2. In terms of biological role, catalyzes the decarboxylation of orotidine 5'-monophosphate (OMP) to uridine 5'-monophosphate (UMP). The sequence is that of Orotidine 5'-phosphate decarboxylase from Aquifex aeolicus (strain VF5).